The following is a 313-amino-acid chain: NAD-capped RNA hydrolase NudC (313 aa).

A substrate-binding site is contributed by Arg-111. Positions 168 to 293 (PRIDPAVICL…DWSSASESKL (126 aa)) constitute a Nudix hydrolase domain. A divalent metal cation is bound by residues Ala-202, Glu-218, and Glu-222. The short motif at 203–224 (GFVEAGESFEVCVAREIREEIG) is the Nudix box element. 236-243 (QQWPFPRS) serves as a coordination point for substrate. Glu-264 contributes to the a divalent metal cation binding site.

Belongs to the Nudix hydrolase family. NudC subfamily. In terms of assembly, homodimer. The cofactor is Mg(2+). Mn(2+) serves as cofactor.

It catalyses the reaction a 5'-end NAD(+)-phospho-ribonucleoside in mRNA + H2O = a 5'-end phospho-adenosine-phospho-ribonucleoside in mRNA + beta-nicotinamide D-ribonucleotide + 2 H(+). The enzyme catalyses NAD(+) + H2O = beta-nicotinamide D-ribonucleotide + AMP + 2 H(+). It carries out the reaction NADH + H2O = reduced beta-nicotinamide D-ribonucleotide + AMP + 2 H(+). In terms of biological role, mRNA decapping enzyme that specifically removes the nicotinamide adenine dinucleotide (NAD) cap from a subset of mRNAs by hydrolyzing the diphosphate linkage to produce nicotinamide mononucleotide (NMN) and 5' monophosphate mRNA. The NAD-cap is present at the 5'-end of some mRNAs and stabilizes RNA against 5'-processing. Has preference for mRNAs with a 5'-end purine. Catalyzes the hydrolysis of a broad range of dinucleotide pyrophosphates. This chain is NAD-capped RNA hydrolase NudC, found in Mycobacterium tuberculosis (strain ATCC 25177 / H37Ra).